The chain runs to 369 residues: Probable dual-specificity RNA methyltransferase RlmN (369 aa).

The Proton acceptor role is filled by Glu-108. A Radical SAM core domain is found at 114 to 357; that stretch reads YPDRATVCIS…CTVRDTRGQE (244 aa). Residues Cys-121 and Cys-362 are joined by a disulfide bond. [4Fe-4S] cluster-binding residues include Cys-128, Cys-132, and Cys-135. S-adenosyl-L-methionine-binding positions include 183-184, Ser-217, 240-242, and Asn-319; these read GE and SLH. The S-methylcysteine intermediate role is filled by Cys-362.

It belongs to the radical SAM superfamily. RlmN family. [4Fe-4S] cluster is required as a cofactor.

Its subcellular location is the cytoplasm. It carries out the reaction adenosine(2503) in 23S rRNA + 2 reduced [2Fe-2S]-[ferredoxin] + 2 S-adenosyl-L-methionine = 2-methyladenosine(2503) in 23S rRNA + 5'-deoxyadenosine + L-methionine + 2 oxidized [2Fe-2S]-[ferredoxin] + S-adenosyl-L-homocysteine. It catalyses the reaction adenosine(37) in tRNA + 2 reduced [2Fe-2S]-[ferredoxin] + 2 S-adenosyl-L-methionine = 2-methyladenosine(37) in tRNA + 5'-deoxyadenosine + L-methionine + 2 oxidized [2Fe-2S]-[ferredoxin] + S-adenosyl-L-homocysteine. In terms of biological role, specifically methylates position 2 of adenine 2503 in 23S rRNA and position 2 of adenine 37 in tRNAs. This chain is Probable dual-specificity RNA methyltransferase RlmN, found in Saccharopolyspora erythraea (strain ATCC 11635 / DSM 40517 / JCM 4748 / NBRC 13426 / NCIMB 8594 / NRRL 2338).